The chain runs to 373 residues: ORC1-type DNA replication protein 2 (373 aa).

Residues 63-67, tyrosine 205, and arginine 217 each bind ATP; that span reads TGKTS.

Belongs to the CDC6/cdc18 family.

Involved in regulation of DNA replication. This chain is ORC1-type DNA replication protein 2 (cdc6-2), found in Methanosarcina acetivorans (strain ATCC 35395 / DSM 2834 / JCM 12185 / C2A).